A 313-amino-acid chain; its full sequence is Ribonuclease Z (313 aa).

Zn(2+) contacts are provided by H63, H65, D67, H68, H142, D212, and H270. Catalysis depends on D67, which acts as the Proton acceptor.

Belongs to the RNase Z family. In terms of assembly, homodimer. Zn(2+) serves as cofactor.

It catalyses the reaction Endonucleolytic cleavage of RNA, removing extra 3' nucleotides from tRNA precursor, generating 3' termini of tRNAs. A 3'-hydroxy group is left at the tRNA terminus and a 5'-phosphoryl group is left at the trailer molecule.. In terms of biological role, zinc phosphodiesterase, which displays some tRNA 3'-processing endonuclease activity. Probably involved in tRNA maturation, by removing a 3'-trailer from precursor tRNA. The chain is Ribonuclease Z from Enterococcus faecalis (strain ATCC 700802 / V583).